We begin with the raw amino-acid sequence, 469 residues long: Glutamine synthetase (469 aa).

The GS beta-grasp domain occupies 14-99; that stretch reads NDVKFVDLRF…FCDILDPVSG (86 aa). Residues 106-469 form the GS catalytic domain; the sequence is PRGTAKKAEA…PVEFDMYYSV (364 aa). Glu-131 and Glu-133 together coordinate Mg(2+). Residue Glu-209 participates in ATP binding. Mg(2+) contacts are provided by Glu-214 and Glu-221. L-glutamate-binding positions include 265 to 266 and Gly-266; that span reads NG. His-270 contributes to the Mg(2+) binding site. ATP is bound by residues 272–274 and Ser-274; that span reads HLS. L-glutamate-binding residues include Arg-322, Glu-328, and Arg-340. ATP is bound by residues Arg-340, Arg-345, and Lys-353. Glu-358 lines the Mg(2+) pocket. Arg-360 provides a ligand contact to L-glutamate. Tyr-398 carries the O-AMP-tyrosine modification.

The protein belongs to the glutamine synthetase family. Oligomer of 12 subunits arranged in the form of two hexameric ring. Mg(2+) serves as cofactor.

It localises to the cytoplasm. It catalyses the reaction L-glutamate + NH4(+) + ATP = L-glutamine + ADP + phosphate + H(+). With respect to regulation, the activity of this enzyme could be controlled by adenylation under conditions of abundant glutamine. In terms of biological role, catalyzes the ATP-dependent biosynthesis of glutamine from glutamate and ammonia. The protein is Glutamine synthetase of Rhizobium meliloti (strain 1021) (Ensifer meliloti).